Consider the following 195-residue polypeptide: Imidazoleglycerol-phosphate dehydratase (195 aa).

Belongs to the imidazoleglycerol-phosphate dehydratase family.

It is found in the cytoplasm. It carries out the reaction D-erythro-1-(imidazol-4-yl)glycerol 3-phosphate = 3-(imidazol-4-yl)-2-oxopropyl phosphate + H2O. It functions in the pathway amino-acid biosynthesis; L-histidine biosynthesis; L-histidine from 5-phospho-alpha-D-ribose 1-diphosphate: step 6/9. The polypeptide is Imidazoleglycerol-phosphate dehydratase (Geobacter metallireducens (strain ATCC 53774 / DSM 7210 / GS-15)).